The following is a 245-amino-acid chain: Ribosomal RNA small subunit methyltransferase G (245 aa).

Residues G85, F90, 108–110 (DST), 136–137 (AE), and R155 contribute to the S-adenosyl-L-methionine site.

Belongs to the methyltransferase superfamily. RNA methyltransferase RsmG family.

The protein localises to the cytoplasm. Specifically methylates the N7 position of a guanine in 16S rRNA. The polypeptide is Ribosomal RNA small subunit methyltransferase G (Nostoc sp. (strain PCC 7120 / SAG 25.82 / UTEX 2576)).